A 526-amino-acid polypeptide reads, in one-letter code: Protein spinster homolog 1 (526 aa).

The segment at 1-44 (MTSRRSHGDVTPFLTQADNTEEEGVRDPESQSSDEEEEEGKDHG) is disordered. 12 helical membrane-spanning segments follow: residues 59 to 79 (VIIV…RFTV), 98 to 118 (GLVQ…FGYL), 126 to 146 (LIMC…SFVS), 159 to 179 (LVGV…ADLF), 187 to 207 (MLSF…IVGS), 218 to 238 (WALR…IFVA), 272 to 292 (FILS…LALW), 321 to 341 (MIFG…GVEI), 355 to 375 (LVCA…LAFA), 384 to 404 (VFIF…ADIL), 419 to 439 (LQIV…IGVI), and 463 to 483 (MICA…ALFI).

The protein belongs to the major facilitator superfamily. Spinster (TC 2.A.1.49) family.

It localises to the lysosome membrane. The catalysed reaction is a 1-acyl-sn-glycero-3-phosphocholine(out) + H(+)(out) = a 1-acyl-sn-glycero-3-phosphocholine(in) + H(+)(in). The enzyme catalyses a 1-acyl-sn-glycero-3-phosphoethanolamine(out) + H(+)(out) = a 1-acyl-sn-glycero-3-phosphoethanolamine(in) + H(+)(in). It catalyses the reaction a 1-O-(1Z-alkenyl)-sn-glycero-3-phosphocholine(out) + H(+)(out) = a 1-O-(1Z-alkenyl)-sn-glycero-3-phosphocholine(in) + H(+)(in). It carries out the reaction a 1-O-(1Z-alkenyl)-sn-glycero-3-phosphoethanolamine(out) + H(+)(out) = a 1-O-(1Z-alkenyl)-sn-glycero-3-phosphoethanolamine(in) + H(+)(in). In terms of biological role, mediates the rate-limiting, proton-dependent, lysosomal efflux of lysophospholipids. Selective for zwitterionic headgroups such as lysophosphatidylcholine (LPC) and lysophosphatidylethanolamine (LPE). Essential player in lysosomal homeostasis. The chain is Protein spinster homolog 1 (spns1) from Xenopus laevis (African clawed frog).